A 94-amino-acid polypeptide reads, in one-letter code: Large ribosomal subunit protein bL27 (94 aa).

The propeptide occupies 1 to 10 (MQFLFNIQLF).

Belongs to the bacterial ribosomal protein bL27 family. In terms of processing, the N-terminus is cleaved by ribosomal processing cysteine protease Prp.

The protein is Large ribosomal subunit protein bL27 of Fusobacterium nucleatum subsp. nucleatum (strain ATCC 25586 / DSM 15643 / BCRC 10681 / CIP 101130 / JCM 8532 / KCTC 2640 / LMG 13131 / VPI 4355).